A 121-amino-acid polypeptide reads, in one-letter code: MIDVLGPEKRRRRTTQEKIAIVQQSFEPGMTVSLVARQHGVAASQLFLWRKQYQEGSLTAVAAGEQVVPASELAAAMKQIKELQRLLGKKTMENELLKEAVEYGRAKKWIAHAPLLPGDGE.

This sequence belongs to the transposase 8 family.

Involved in the transposition of the insertion sequence IS2. This is Transposase InsC for insertion element IS2A (insC1) from Escherichia coli (strain K12).